A 353-amino-acid chain; its full sequence is Endophilin-A3 (353 aa).

Residues Met-1 to Ile-21 are membrane-binding amphipathic helix. The BAR domain maps to Ser-18 to Ser-249. The tract at residues Pro-60–Pro-87 is required for dimerization upon membrane association. Residues Asp-180–Met-201 adopt a coiled-coil conformation. An interaction with ARC region spans residues Phe-218–Glu-254. Residues Val-291–Pro-350 enclose the SH3 domain.

Belongs to the endophilin family. In terms of assembly, interacts with ARC. Interacts with SYNJ1 and DNM1. As to expression, highest level in a region associated with endocytosis of yolk proteins in developing oocytes (at protein level). Highest level in small ovarian follicles. High levels in brain and testis. Lower level in adrenal glands.

The protein resides in the cytoplasm. The protein localises to the early endosome membrane. In terms of biological role, implicated in endocytosis. May recruit other proteins to membranes with high curvature. Implicated in endocytosis of yolk proteins during oogenesis. This Gallus gallus (Chicken) protein is Endophilin-A3.